The sequence spans 273 residues: MQDLQKIIDDAFENRASLSPAAAPAAVRDAVAEVIAGLDAGTLRVAEKKDGQWVVNQWIKKAVLISFRLRDNEVIPAGGLNFFDKVPTKFGDYTPEQFQQGGFRVVPPAVARKGSYIAKNVVLMPSYVNIGAYVDEGTMVDTWATVGSCAQIGKNVHLSGGVGIGGVLEPVQAGPVIIEDNVFVGARSEVVEGVIIEENAVLSMGVYIGQSTKIYDRETGSITYGRVPAGAVVVPGSLPSADGKYSLYCAVIVKKVDAQTRAKTGINELLRGA.

The substrate site is built by Arg104 and Asp141.

This sequence belongs to the transferase hexapeptide repeat family. In terms of assembly, homotrimer.

It localises to the cytoplasm. The catalysed reaction is (S)-2,3,4,5-tetrahydrodipicolinate + succinyl-CoA + H2O = (S)-2-succinylamino-6-oxoheptanedioate + CoA. It participates in amino-acid biosynthesis; L-lysine biosynthesis via DAP pathway; LL-2,6-diaminopimelate from (S)-tetrahydrodipicolinate (succinylase route): step 1/3. This Azoarcus sp. (strain BH72) protein is 2,3,4,5-tetrahydropyridine-2,6-dicarboxylate N-succinyltransferase.